The following is a 71-amino-acid chain: Small ribosomal subunit protein bS21 (71 aa).

This sequence belongs to the bacterial ribosomal protein bS21 family.

The polypeptide is Small ribosomal subunit protein bS21 (Thioalkalivibrio sulfidiphilus (strain HL-EbGR7)).